Here is a 277-residue protein sequence, read N- to C-terminus: MEMO1 family protein CTN_0605 (277 aa).

It belongs to the MEMO1 family.

This Thermotoga neapolitana (strain ATCC 49049 / DSM 4359 / NBRC 107923 / NS-E) protein is MEMO1 family protein CTN_0605.